Reading from the N-terminus, the 76-residue chain is uncharacterized protein (76 aa).

The chain crosses the membrane as a helical span at residues 53-70; sequence STKLHIIWFCIFAIFIAV.

The protein resides in the membrane. This is an uncharacterized protein from Haemophilus influenzae (strain ATCC 51907 / DSM 11121 / KW20 / Rd).